The sequence spans 1538 residues: Lysophospholipase nte1 (1538 aa).

The Cytoplasmic portion of the chain corresponds to 1–74; the sequence is MATDGGPLAA…PPPTPSTMAG (74 aa). Residues 75-95 form a helical membrane-spanning segment; that stretch reads WFGWVFSFFFQVIPSVLYWVI. Topologically, residues 96–117 are lumenal; the sequence is TFATITLPTWLFTLFSMSLTFT. The chain crosses the membrane as a helical span at residues 118-138; it reads MNFTTLLLIALAIVSTISWFI. Residues 139–1538 are Cytoplasmic-facing; that stretch reads RYRFLNMYSR…RTLAPRRASI (1400 aa). Disordered regions lie at residues 242–264, 302–393, and 529–559; these read KPNV…DHRV, EGSS…KSVH, and AAQS…GDLL. Over residues 302 to 314 the composition is skewed to low complexity; that stretch reads EGSSSSASSVGPS. Residues 329-345 show a composition bias toward basic and acidic residues; the sequence is GLEDSPRSNFVRDHGDS. A nucleoside 3',5'-cyclic phosphate contacts are provided by residues 692–811 and 856–976; these read GGTS…QGYV and RLTS…IAQR. Residues 1235-1399 enclose the PNPLA domain; sequence LVLGGGGARG…IDNLTVTHMK (165 aa). The GXGXXG signature appears at 1239 to 1244; it reads GGGARG. The GXSXG signature appears at 1266 to 1270; that stretch reads GTSIG. Ser1268 acts as the Nucleophile in catalysis. The active-site Proton acceptor is Asp1386. Residues 1386 to 1388 carry the DGA/G motif; it reads DGG. The tract at residues 1517–1538 is disordered; sequence LPEETEEKKKLQRTLAPRRASI.

Belongs to the NTE family.

Its subcellular location is the endoplasmic reticulum membrane. It catalyses the reaction a 1-acyl-sn-glycero-3-phosphocholine + H2O = sn-glycerol 3-phosphocholine + a fatty acid + H(+). Its activity is regulated as follows. Inhibited by organophosphorus esters. Functionally, intracellular phospholipase B that catalyzes the double deacylation of phosphatidylcholine (PC) to glycerophosphocholine (GroPCho). Plays an important role in membrane lipid homeostasis. Responsible for the rapid PC turnover in response to inositol, elevated temperatures, or when choline is present in the growth medium. The protein is Lysophospholipase nte1 (nte1) of Aspergillus oryzae (strain ATCC 42149 / RIB 40) (Yellow koji mold).